Consider the following 256-residue polypeptide: 4-hydroxy-tetrahydrodipicolinate reductase (256 aa).

NAD(+) is bound by residues 12–17 (GINGRV), Asp-39, 86–88 (GTT), and 110–113 (AANY). His-144 (proton donor/acceptor) is an active-site residue. His-145 contributes to the (S)-2,3,4,5-tetrahydrodipicolinate binding site. The Proton donor role is filled by Lys-148. Residue 154-155 (GT) coordinates (S)-2,3,4,5-tetrahydrodipicolinate.

It belongs to the DapB family.

It is found in the cytoplasm. The enzyme catalyses (S)-2,3,4,5-tetrahydrodipicolinate + NAD(+) + H2O = (2S,4S)-4-hydroxy-2,3,4,5-tetrahydrodipicolinate + NADH + H(+). It carries out the reaction (S)-2,3,4,5-tetrahydrodipicolinate + NADP(+) + H2O = (2S,4S)-4-hydroxy-2,3,4,5-tetrahydrodipicolinate + NADPH + H(+). Its pathway is amino-acid biosynthesis; L-lysine biosynthesis via DAP pathway; (S)-tetrahydrodipicolinate from L-aspartate: step 4/4. Functionally, catalyzes the conversion of 4-hydroxy-tetrahydrodipicolinate (HTPA) to tetrahydrodipicolinate. The chain is 4-hydroxy-tetrahydrodipicolinate reductase from Gluconacetobacter diazotrophicus (strain ATCC 49037 / DSM 5601 / CCUG 37298 / CIP 103539 / LMG 7603 / PAl5).